The following is a 91-amino-acid chain: Putative defensin-like protein 83 (91 aa).

The first 27 residues, 1–27 (MATNKFLSILLLSLMAFAAILLPMISG), serve as a signal peptide directing secretion. Disulfide bonds link cysteine 32-cysteine 71, cysteine 37-cysteine 57, cysteine 43-cysteine 69, and cysteine 47-cysteine 70.

This sequence belongs to the DEFL family.

The protein localises to the secreted. The sequence is that of Putative defensin-like protein 83 (LCR46) from Arabidopsis thaliana (Mouse-ear cress).